The chain runs to 164 residues: CASP-like protein 1C1 (164 aa).

Over 1 to 7 (MVKLTKR) the chain is Cytoplasmic. A helical membrane pass occupies residues 8 to 28 (IGGLVLRLAAFGAALAALIVM). Residues 29–51 (ITSRERASFLAISLEAKYTDMAA) are Extracellular-facing. Residues 52 to 72 (FKYFVIANAVVSVYSFLVLFL) form a helical membrane-spanning segment. Topologically, residues 73–80 (PKESLLWK) are cytoplasmic. A helical transmembrane segment spans residues 81–101 (FVVVLDLVMTMLLTSSLSAAL). The Extracellular segment spans residues 102 to 129 (AVAQVGKKGNANAGWLPICGQVPKFCDQ). The chain crosses the membrane as a helical span at residues 130–150 (ITGALIAGFVALVLYVLLLLY). At 151-164 (SLHAVVDPFLLQKS) the chain is on the cytoplasmic side.

Belongs to the Casparian strip membrane proteins (CASP) family. In terms of assembly, homodimer and heterodimers. In terms of tissue distribution, expressed in the stele of the root.

It is found in the cell membrane. The chain is CASP-like protein 1C1 from Arabidopsis thaliana (Mouse-ear cress).